The primary structure comprises 428 residues: D-amino acid dehydrogenase (428 aa).

3–17 (VVILGSGVVGVASAY) contributes to the FAD binding site.

It belongs to the DadA oxidoreductase family. It depends on FAD as a cofactor.

The catalysed reaction is a D-alpha-amino acid + A + H2O = a 2-oxocarboxylate + AH2 + NH4(+). Its pathway is amino-acid degradation; D-alanine degradation; NH(3) and pyruvate from D-alanine: step 1/1. In terms of biological role, oxidative deamination of D-amino acids. The chain is D-amino acid dehydrogenase from Burkholderia pseudomallei (strain K96243).